The primary structure comprises 110 residues: Nucleoid-associated protein YpAngola_A2890 (110 aa).

The segment at 90–110 is disordered; that stretch reads KEKMASVSNGMQLPPGFKMPF.

Belongs to the YbaB/EbfC family. Homodimer.

The protein localises to the cytoplasm. It localises to the nucleoid. In terms of biological role, binds to DNA and alters its conformation. May be involved in regulation of gene expression, nucleoid organization and DNA protection. This Yersinia pestis bv. Antiqua (strain Angola) protein is Nucleoid-associated protein YpAngola_A2890.